Here is a 148-residue protein sequence, read N- to C-terminus: Arginine repressor (148 aa).

This sequence belongs to the ArgR family.

Its subcellular location is the cytoplasm. It functions in the pathway amino-acid biosynthesis; L-arginine biosynthesis [regulation]. Functionally, regulates arginine biosynthesis genes. The polypeptide is Arginine repressor (Chlorobium chlorochromatii (strain CaD3)).